A 147-amino-acid chain; its full sequence is D-aminoacyl-tRNA deacylase (147 aa).

The Gly-cisPro motif, important for rejection of L-amino acids signature appears at 137 to 138; that stretch reads GP.

It belongs to the DTD family. In terms of assembly, homodimer.

The protein localises to the cytoplasm. It carries out the reaction glycyl-tRNA(Ala) + H2O = tRNA(Ala) + glycine + H(+). It catalyses the reaction a D-aminoacyl-tRNA + H2O = a tRNA + a D-alpha-amino acid + H(+). An aminoacyl-tRNA editing enzyme that deacylates mischarged D-aminoacyl-tRNAs. Also deacylates mischarged glycyl-tRNA(Ala), protecting cells against glycine mischarging by AlaRS. Acts via tRNA-based rather than protein-based catalysis; rejects L-amino acids rather than detecting D-amino acids in the active site. By recycling D-aminoacyl-tRNA to D-amino acids and free tRNA molecules, this enzyme counteracts the toxicity associated with the formation of D-aminoacyl-tRNA entities in vivo and helps enforce protein L-homochirality. The polypeptide is D-aminoacyl-tRNA deacylase (Jannaschia sp. (strain CCS1)).